The chain runs to 167 residues: Ureidoglycolate lyase (167 aa).

Belongs to the ureidoglycolate lyase family. Homodimer. Requires Ni(2+) as cofactor.

It catalyses the reaction (S)-ureidoglycolate = urea + glyoxylate. It participates in nitrogen metabolism; (S)-allantoin degradation. In terms of biological role, catalyzes the catabolism of the allantoin degradation intermediate (S)-ureidoglycolate, generating urea and glyoxylate. Involved in the utilization of allantoin as nitrogen source. The chain is Ureidoglycolate lyase from Pseudomonas fluorescens (strain ATCC BAA-477 / NRRL B-23932 / Pf-5).